The primary structure comprises 190 residues: Threonylcarbamoyl-AMP synthase (190 aa).

The 184-residue stretch at 7-190 (GDAIAAAIDV…ALTGELFRQG (184 aa)) folds into the YrdC-like domain.

The protein belongs to the SUA5 family. TsaC subfamily.

The protein resides in the cytoplasm. The catalysed reaction is L-threonine + hydrogencarbonate + ATP = L-threonylcarbamoyladenylate + diphosphate + H2O. Functionally, required for the formation of a threonylcarbamoyl group on adenosine at position 37 (t(6)A37) in tRNAs that read codons beginning with adenine. Catalyzes the conversion of L-threonine, HCO(3)(-)/CO(2) and ATP to give threonylcarbamoyl-AMP (TC-AMP) as the acyladenylate intermediate, with the release of diphosphate. This is Threonylcarbamoyl-AMP synthase from Shigella boydii serotype 4 (strain Sb227).